We begin with the raw amino-acid sequence, 627 residues long: Protein fem-1 homolog B (627 aa).

ANK repeat units lie at residues glutamine 45–glutamine 74, aspartate 87–histidine 116, threonine 120–isoleucine 149, and tyrosine 153–alanine 182. The Zn(2+) site is built by histidine 185, cysteine 186, and histidine 218. ANK repeat units follow at residues cysteine 186–valine 215 and histidine 218–serine 248. A TPR repeat occupies serine 344 to glycine 377. ANK repeat units lie at residues glutamate 483–alanine 527 and glutamate 531–methionine 568.

The protein belongs to the fem-1 family. As to quaternary structure, component of a CRL2 E3 ubiquitin-protein ligase complex, also named ECS (Elongin BC-CUL2/5-SOCS-box protein) complex, composed of CUL2, Elongin BC (ELOB and ELOC), RBX1 and substrate-specific adapter FEM1B. Homooligomer. Interacts with PPM1F and PHTF1. Interacts with the death domain of FAS/TNFRSF6 and TNFRSF1A. Interacts with CHEK1. Interacts with NKX3-1. Expressed in pancreatic islets, within both beta cells and non-beta cells (at protein level). Highly expressed in adult testis; expressed in all types of spermatogonia. Also expressed in the prostate of neonatal mice.

It localises to the cytoplasm. The protein localises to the nucleus. The protein operates within protein modification; protein ubiquitination. Activity of the CRL2(FEM1B) complex toward FNIP1 is inhibited by BEX family proteins (BEX1, BEX2, BEX3 and/or BEX4) in absence of reductive stress. Mechanistically, BEX proteins act as pseudosubstrate inhibitors that associate with FEM1B via zinc in absence of reductive stress, thereby preventing association between FEM1B and FNIP1. Its function is as follows. Substrate-recognition component of a Cul2-RING (CRL2) E3 ubiquitin-protein ligase complex of the DesCEND (destruction via C-end degrons) pathway, which recognizes a C-degron located at the extreme C terminus of target proteins, leading to their ubiquitination and degradation. The C-degron recognized by the DesCEND pathway is usually a motif of less than ten residues and can be present in full-length proteins, truncated proteins or proteolytically cleaved forms. The CRL2(FEM1B) complex specifically recognizes proteins ending with -Gly-Leu-Asp-Arg, such as CDK5R1, leading to their ubiquitination and degradation. Also acts as a regulator of the reductive stress response by mediating ubiquitination of reduced FNIP1: in response to reductive stress, the CRL2(FEM1B) complex specifically recognizes a conserved Cys degron in FNIP1 when this degron is reduced, leading to FNIP1 degradation and subsequent activation of mitochondria to recalibrate reactive oxygen species (ROS). Mechanistically, recognizes and binds reduced FNIP1 through two interface zinc ions, which act as a molecular glue that recruit reduced FNIP1 to FEM1B. Promotes ubiquitination of GLI1, suppressing GLI1 transcriptional activator activity. Promotes ubiquitination and degradation of ANKRD37. Promotes ubiquitination and degradation of SLBP. Involved in apoptosis by acting as a death receptor-associated protein that mediates apoptosis. Also involved in glucose homeostasis in pancreatic islet. May also act as an adapter/mediator in replication stress-induced signaling that leads to the activation of CHEK1. The chain is Protein fem-1 homolog B from Mus musculus (Mouse).